Consider the following 588-residue polypeptide: Aspartate--tRNA ligase (588 aa).

Glutamate 174 contacts L-aspartate. An aspartate region spans residues 198-201 (QLFK). Position 220 (arginine 220) interacts with L-aspartate. ATP is bound by residues 220-222 (RDE) and glutamine 229. Histidine 448 serves as a coordination point for L-aspartate. Glutamate 482 contacts ATP. Residue arginine 489 participates in L-aspartate binding. Residue 534-537 (GIDR) participates in ATP binding.

Belongs to the class-II aminoacyl-tRNA synthetase family. Type 1 subfamily. In terms of assembly, homodimer.

The protein localises to the cytoplasm. It catalyses the reaction tRNA(Asp) + L-aspartate + ATP = L-aspartyl-tRNA(Asp) + AMP + diphosphate. Functionally, catalyzes the attachment of L-aspartate to tRNA(Asp) in a two-step reaction: L-aspartate is first activated by ATP to form Asp-AMP and then transferred to the acceptor end of tRNA(Asp). The chain is Aspartate--tRNA ligase from Xanthomonas campestris pv. campestris (strain 8004).